A 529-amino-acid polypeptide reads, in one-letter code: CTP synthase (529 aa).

The segment at 1–267 (MKEAKFIFVT…DTQILEHFHL (267 aa)) is amidoligase domain. Residue serine 15 participates in CTP binding. A UTP-binding site is contributed by serine 15. ATP contacts are provided by residues 16–21 (SLGKGL) and aspartate 73. Mg(2+)-binding residues include aspartate 73 and glutamate 141. Residues 148 to 150 (DIE), 188 to 193 (KTKPTQ), and lysine 224 contribute to the CTP site. UTP is bound by residues 188–193 (KTKPTQ) and lysine 224. Positions 292–529 (TVSIVGKYTE…SFVKAAIDKK (238 aa)) constitute a Glutamine amidotransferase type-1 domain. Glycine 354 contacts L-glutamine. The active-site Nucleophile; for glutamine hydrolysis is the cysteine 381. Residues 382-385 (LGMQ), glutamate 405, and arginine 459 contribute to the L-glutamine site. Catalysis depends on residues histidine 504 and glutamate 506.

This sequence belongs to the CTP synthase family. In terms of assembly, homotetramer.

The enzyme catalyses UTP + L-glutamine + ATP + H2O = CTP + L-glutamate + ADP + phosphate + 2 H(+). It carries out the reaction L-glutamine + H2O = L-glutamate + NH4(+). It catalyses the reaction UTP + NH4(+) + ATP = CTP + ADP + phosphate + 2 H(+). Its pathway is pyrimidine metabolism; CTP biosynthesis via de novo pathway; CTP from UDP: step 2/2. With respect to regulation, allosterically activated by GTP, when glutamine is the substrate; GTP has no effect on the reaction when ammonia is the substrate. The allosteric effector GTP functions by stabilizing the protein conformation that binds the tetrahedral intermediate(s) formed during glutamine hydrolysis. Inhibited by the product CTP, via allosteric rather than competitive inhibition. In terms of biological role, catalyzes the ATP-dependent amination of UTP to CTP with either L-glutamine or ammonia as the source of nitrogen. Regulates intracellular CTP levels through interactions with the four ribonucleotide triphosphates. The sequence is that of CTP synthase from Wolbachia pipientis wMel.